Here is a 1032-residue protein sequence, read N- to C-terminus: Protein translocase subunit SecA (1032 aa).

ATP is bound by residues Q121, 139–143 (GEGKT), and D570. Positions 945 to 975 (TAGGSENATEDAPKPAKRGVGGAARRVSNAA) are disordered. 4 residues coordinate Zn(2+): C994, C996, C1005, and H1006.

The protein belongs to the SecA family. As to quaternary structure, monomer and homodimer. Part of the essential Sec protein translocation apparatus which comprises SecA, SecYEG and auxiliary proteins SecDF. Other proteins may also be involved. Zn(2+) is required as a cofactor.

Its subcellular location is the cell membrane. It is found in the cytoplasm. The enzyme catalyses ATP + H2O + cellular proteinSide 1 = ADP + phosphate + cellular proteinSide 2.. In terms of biological role, part of the Sec protein translocase complex. Interacts with the SecYEG preprotein conducting channel. Has a central role in coupling the hydrolysis of ATP to the transfer of proteins into and across the cell membrane, serving as an ATP-driven molecular motor driving the stepwise translocation of polypeptide chains across the membrane. The sequence is that of Protein translocase subunit SecA from Herpetosiphon aurantiacus (strain ATCC 23779 / DSM 785 / 114-95).